A 442-amino-acid polypeptide reads, in one-letter code: NALCN channel auxiliary factor 2 (442 aa).

The chain crosses the membrane as a helical span at residues Leu-42–Gly-62. 5 N-linked (GlcNAc...) asparagine glycosylation sites follow: Asn-77, Asn-100, Asn-171, Asn-279, and Asn-354. Residues Cys-406–Val-426 traverse the membrane as a helical segment.

The protein belongs to the NALF family.

It is found in the membrane. In terms of biological role, probable component of the NALCN channel complex, a channel that regulates the resting membrane potential and controls neuronal excitability. The protein is NALCN channel auxiliary factor 2 (nalf2) of Xenopus tropicalis (Western clawed frog).